The sequence spans 172 residues: MACCSTSFCGFPICSTGGTCGSSPCQPTCCQTSCCQPTSIQTSCCQPISIQTSCCQPTSIQTSCCQPTCLQTSGCETGCGIGGSIGYGQVGSSGAVSSRTRWCRPDCRVEGTSLPPCCVVSCTPPSCCQLYYAQASCCRPSYCGQSCCRPACCCQPTCIEPICEPSCCEPTC.

The residue at position 2 (Ala-2) is an N-acetylalanine. 5 consecutive repeats follow at residues 27–36 (PTCCQTSCCQ), 37–46 (PTSIQTSCCQ), 47–56 (PISIQTSCCQ), 57–66 (PTSIQTSCCQ), and 67–76 (PTCLQTSGCE).

The keratin products of mammalian epidermal derivatives such as wool and hair consist of microfibrils embedded in a rigid matrix of other proteins. The matrix proteins include the high-sulfur and high-tyrosine keratins, having molecular weights of 6-20 kDa, whereas the microfibrils contain the larger, low-sulfur keratins (40-56 kDa). The polypeptide is Keratin, high-sulfur matrix protein, B2A (Ovis aries (Sheep)).